We begin with the raw amino-acid sequence, 394 residues long: Fatty acid resistance protein FarA (394 aa).

Positions 1-23 (MKSGNSEPNLMETHTDETKLQNT) are disordered. The helical transmembrane segment at 33–53 (ALTLLFALSAAAAGSAFFLWW) threads the bilayer. Positions 356–376 (SAAGAPVSKTPGAALPEMEST) are disordered.

It belongs to the membrane fusion protein (MFP) (TC 8.A.1) family. In terms of assembly, probably part of a tripartite efflux system FarAB-MtrE, which is composed of an inner membrane transporter, FarB, a periplasmic membrane fusion protein, FarA, and an outer membrane component, MtrE.

The protein localises to the cell inner membrane. Its function is as follows. Mediates resistance to long-chained antibacterial fatty acids (FAs). Function is dependent on the MtrE outer membrane protein. The sequence is that of Fatty acid resistance protein FarA from Neisseria gonorrhoeae.